We begin with the raw amino-acid sequence, 380 residues long: Probable dual-specificity RNA methyltransferase RlmN (380 aa).

E112 serves as the catalytic Proton acceptor. One can recognise a Radical SAM core domain in the interval Y118–E358. A disulfide bridge links C125 with C363. [4Fe-4S] cluster-binding residues include C132, C136, and C139. Residues G187–E188, S221, S244–H246, and N320 contribute to the S-adenosyl-L-methionine site. C363 acts as the S-methylcysteine intermediate in catalysis.

This sequence belongs to the radical SAM superfamily. RlmN family. [4Fe-4S] cluster is required as a cofactor.

The protein resides in the cytoplasm. The enzyme catalyses adenosine(2503) in 23S rRNA + 2 reduced [2Fe-2S]-[ferredoxin] + 2 S-adenosyl-L-methionine = 2-methyladenosine(2503) in 23S rRNA + 5'-deoxyadenosine + L-methionine + 2 oxidized [2Fe-2S]-[ferredoxin] + S-adenosyl-L-homocysteine. It carries out the reaction adenosine(37) in tRNA + 2 reduced [2Fe-2S]-[ferredoxin] + 2 S-adenosyl-L-methionine = 2-methyladenosine(37) in tRNA + 5'-deoxyadenosine + L-methionine + 2 oxidized [2Fe-2S]-[ferredoxin] + S-adenosyl-L-homocysteine. Functionally, specifically methylates position 2 of adenine 2503 in 23S rRNA and position 2 of adenine 37 in tRNAs. This is Probable dual-specificity RNA methyltransferase RlmN from Salinispora arenicola (strain CNS-205).